The chain runs to 102 residues: Large ribosomal subunit protein uL24 (102 aa).

The protein belongs to the universal ribosomal protein uL24 family. Part of the 50S ribosomal subunit.

Its function is as follows. One of two assembly initiator proteins, it binds directly to the 5'-end of the 23S rRNA, where it nucleates assembly of the 50S subunit. In terms of biological role, one of the proteins that surrounds the polypeptide exit tunnel on the outside of the subunit. The chain is Large ribosomal subunit protein uL24 from Lysinibacillus sphaericus (strain C3-41).